The sequence spans 663 residues: UvrABC system protein B (663 aa).

The region spanning 31-188 (DNIEGGEKAQ…NDLVDIQFER (158 aa)) is the Helicase ATP-binding domain. Position 44–51 (44–51 (GATGTGKT)) interacts with ATP. The Beta-hairpin motif lies at 97-120 (YYDYYQPEAYVPSSDTYIEKDSSV). One can recognise a Helicase C-terminal domain in the interval 435–601 (QMDDLLGEIN…TIKKDIRDLI (167 aa)). The UVR domain occupies 627–662 (QEAIKKLQKQMQEAAELLDFELAAQIRDMVLELKAM).

The protein belongs to the UvrB family. As to quaternary structure, forms a heterotetramer with UvrA during the search for lesions. Interacts with UvrC in an incision complex.

Its subcellular location is the cytoplasm. The UvrABC repair system catalyzes the recognition and processing of DNA lesions. A damage recognition complex composed of 2 UvrA and 2 UvrB subunits scans DNA for abnormalities. Upon binding of the UvrA(2)B(2) complex to a putative damaged site, the DNA wraps around one UvrB monomer. DNA wrap is dependent on ATP binding by UvrB and probably causes local melting of the DNA helix, facilitating insertion of UvrB beta-hairpin between the DNA strands. Then UvrB probes one DNA strand for the presence of a lesion. If a lesion is found the UvrA subunits dissociate and the UvrB-DNA preincision complex is formed. This complex is subsequently bound by UvrC and the second UvrB is released. If no lesion is found, the DNA wraps around the other UvrB subunit that will check the other stand for damage. In Streptococcus mutans serotype c (strain ATCC 700610 / UA159), this protein is UvrABC system protein B.